The primary structure comprises 31 residues: Cytochrome b6-f complex subunit 6 (31 aa).

Residues 4–24 (ITSYFGFLLAALTITSVLFIG) traverse the membrane as a helical segment.

It belongs to the PetL family. In terms of assembly, the 4 large subunits of the cytochrome b6-f complex are cytochrome b6, subunit IV (17 kDa polypeptide, PetD), cytochrome f and the Rieske protein, while the 4 small subunits are PetG, PetL, PetM and PetN. The complex functions as a dimer.

It is found in the plastid. It localises to the chloroplast thylakoid membrane. Functionally, component of the cytochrome b6-f complex, which mediates electron transfer between photosystem II (PSII) and photosystem I (PSI), cyclic electron flow around PSI, and state transitions. PetL is important for photoautotrophic growth as well as for electron transfer efficiency and stability of the cytochrome b6-f complex. The sequence is that of Cytochrome b6-f complex subunit 6 from Nandina domestica (Heavenly bamboo).